A 1202-amino-acid polypeptide reads, in one-letter code: Voltage-gated inwardly rectifying potassium channel KCNH6 (1202 aa).

Residues 1–405 are Cytoplasmic-facing; it reads MGSAALPHAR…YSPFKAVWDW (405 aa). In terms of domain architecture, PAS spans 36-84; it reads IIYCNDGFCEMFGYSRVEVMQRPCTCDFLTGPDTTKSSIAQLTQALLGS. The 53-residue stretch at 87–139 folds into the PAC domain; it reads CKLEILYYRKDTSCFRCLVDVVPVKNEDGVVIMFILNFEDLAQLIAKSSGRSL. Disordered stretches follow at residues 203–243 and 285–315; these read ENCV…LGPR and ERRA…SDSD. A compositionally biased stretch (basic and acidic residues) spans 213–222; it reads LLEKERRPSL. The helical transmembrane segment at 406 to 426 threads the bilayer; sequence LILLLVIYTAVFTPYSAAFLL. Residues 427-443 lie on the Extracellular side of the membrane; it reads NEEQGEEKHWNCSYSCD. N-linked (GlcNAc...) asparagine glycosylation is present at N437. The helical transmembrane segment at 444–464 threads the bilayer; the sequence is PLNIIDLIVDIMFIVDIVINF. Topologically, residues 465–485 are cytoplasmic; sequence RTTYVNINDEVVSHPGKIAIH. A helical membrane pass occupies residues 486-506; it reads YFKGWFLIDMVAAIPFDLLIF. The Extracellular portion of the chain corresponds to 507-515; the sequence is RSGSDETTT. Residues 516 to 536 form a helical; Voltage-sensor membrane-spanning segment; sequence LIGLLKTARLLRLVRVARKLD. The Cytoplasmic portion of the chain corresponds to 537–543; that stretch reads RYSEYGA. A helical transmembrane segment spans residues 544 to 564; the sequence is AVLFLLMCTFALIAHWLACIW. Over 565-608 the chain is Extracellular; it reads YAIGNVERPYMEHKIGWLDNLGDQIGKRYNDSDLSSGPSIKDKY. N594 carries an N-linked (GlcNAc...) asparagine glycan. The segment at residues 609 to 629 is an intramembrane region (pore-forming); sequence VTALYFTFSSLTSVGFGNVSP. Residues 621–626 carry the Selectivity filter motif; it reads SVGFGN. The Extracellular segment spans residues 630 to 635; that stretch reads NTNSEK. The helical transmembrane segment at 636–656 threads the bilayer; it reads IFSICVMLIGSLMYASIFGNV. Residues 657 to 1202 lie on the Cytoplasmic side of the membrane; it reads SAIIQRLYSG…HLSDPVLPGS (546 aa). The segment at 739-839 is cNMP-binding domain; the sequence is AFRGASKGCL…IQREDLLEVL (101 aa). Disordered stretches follow at residues 912-948, 1092-1112, and 1140-1202; these read LTNP…GSPT, TPCA…PSYA, and TVYS…LPGS. Residues 928-937 show a composition bias toward polar residues; the sequence is GSSTTPCSQT. Residues 1179–1195 are compositionally biased toward basic and acidic residues; that stretch reads EHLEASSEHQDIQRHLS.

It belongs to the potassium channel family. H (Eag) (TC 1.A.1.20) subfamily. Kv11.2/KCNH6 sub-subfamily. In terms of assembly, the potassium channel is probably composed of a homo- or heterotetrameric complex of pore-forming alpha subunits that can associate only within their subfamily.

The protein resides in the cell membrane. The catalysed reaction is K(+)(in) = K(+)(out). Its function is as follows. Pore-forming (alpha) subunit of voltage-gated inwardly rectifying potassium channel. Characterized by unusual gating kinetics by producing relatively small outward currents during membrane depolarization and large inward currents during subsequent repolarization which reflect a rapid inactivation during depolarization and quick recovery from inactivation but slow deactivation (closing) during repolarization. Activates even more slowly than KCNH2. This Gallus gallus (Chicken) protein is Voltage-gated inwardly rectifying potassium channel KCNH6.